The primary structure comprises 114 residues: Probable 4-amino-4-deoxy-L-arabinose-phosphoundecaprenol flippase subunit ArnE (114 aa).

The EamA domain occupies 39–112 (RSPWLWLALF…VIGGVALLGQ (74 aa)). 3 consecutive transmembrane segments (helical) span residues 41 to 61 (PWLW…LLVL), 64 to 84 (LPVS…TLIA), and 91 to 111 (PVDV…ALLG).

Belongs to the ArnE family. Heterodimer of ArnE and ArnF.

It is found in the cell inner membrane. It functions in the pathway bacterial outer membrane biogenesis; lipopolysaccharide biosynthesis. Functionally, translocates 4-amino-4-deoxy-L-arabinose-phosphoundecaprenol (alpha-L-Ara4N-phosphoundecaprenol) from the cytoplasmic to the periplasmic side of the inner membrane. This chain is Probable 4-amino-4-deoxy-L-arabinose-phosphoundecaprenol flippase subunit ArnE, found in Pseudomonas fluorescens (strain Pf0-1).